A 395-amino-acid chain; its full sequence is General transcription factor IIH subunit 2 (395 aa).

One can recognise a VWFA domain in the interval 60–236; that stretch reads HLYVVVDGSR…HYKELLTHHV (177 aa). Tyr-95 is modified (phosphotyrosine). Residues 291–308 form a C4-type zinc finger; that stretch reads CPQCRAKYCELPVECKIC.

The protein belongs to the GTF2H2 family. Component of the TFIID-containing RNA polymerase II pre-initiation complex that is composed of TBP and at least GTF2A1, GTF2A2, GTF2E1, GTF2E2, GTF2F1, GTF2H2, GTF2H3, GTF2H4, GTF2H5, GTF2B, TCEA1, ERCC2 and ERCC3. Component of the 7-subunit TFIIH core complex composed of XPB/ERCC3, XPD/ERCC2, GTF2H1, GTF2H2, GTF2H3, GTF2H4 and GTF2H5, which is active in NER. The core complex associates with the 3-subunit CDK-activating kinase (CAK) module composed of CCNH/cyclin H, CDK7 and MNAT1 to form the 10-subunit holoenzyme (holo-TFIIH) active in transcription. Interacts with XPB, XPD, GTF2H1 and GTF2H3. In terms of assembly, (Microbial infection) Interacts with varicella-zoster virus IE63 protein. Widely expressed, with higher expression in skeletal muscle.

The protein localises to the nucleus. Functionally, component of the general transcription and DNA repair factor IIH (TFIIH) core complex, which is involved in general and transcription-coupled nucleotide excision repair (NER) of damaged DNA and, when complexed to CAK, in RNA transcription by RNA polymerase II. In NER, TFIIH acts by opening DNA around the lesion to allow the excision of the damaged oligonucleotide and its replacement by a new DNA fragment. In transcription, TFIIH has an essential role in transcription initiation. When the pre-initiation complex (PIC) has been established, TFIIH is required for promoter opening and promoter escape. Phosphorylation of the C-terminal tail (CTD) of the largest subunit of RNA polymerase II by the kinase module CAK controls the initiation of transcription. The N-terminus of GTF2H2 interacts with and regulates XPD whereas an intact C-terminus is required for a successful escape of RNAP II form the promoter. This is General transcription factor IIH subunit 2 (GTF2H2) from Homo sapiens (Human).